The chain runs to 33 residues: Photosystem II reaction center protein Psb30 (33 aa).

A helical membrane pass occupies residues 5–25 (LIVQLGSLTLITLAGPLVVVL).

It belongs to the Psb30/Ycf12 family. PSII is composed of 1 copy each of membrane proteins PsbA, PsbB, PsbC, PsbD, PsbE, PsbF, PsbH, PsbI, PsbJ, PsbK, PsbL, PsbM, PsbT, PsbY, PsbZ, Psb30/Ycf12, peripheral proteins of the oxygen-evolving complex and a large number of cofactors. It forms dimeric complexes.

Its subcellular location is the plastid. It is found in the chloroplast thylakoid membrane. Its function is as follows. A core subunit of photosystem II (PSII), probably helps stabilize the reaction center. This Euglena deses protein is Photosystem II reaction center protein Psb30.